The following is a 236-amino-acid chain: tRNA (guanine-N(1)-)-methyltransferase (236 aa).

Residues G110 and 129 to 134 (LGDFVL) contribute to the S-adenosyl-L-methionine site.

This sequence belongs to the RNA methyltransferase TrmD family. In terms of assembly, homodimer.

It localises to the cytoplasm. The enzyme catalyses guanosine(37) in tRNA + S-adenosyl-L-methionine = N(1)-methylguanosine(37) in tRNA + S-adenosyl-L-homocysteine + H(+). Its function is as follows. Specifically methylates guanosine-37 in various tRNAs. The protein is tRNA (guanine-N(1)-)-methyltransferase of Clostridium perfringens (strain ATCC 13124 / DSM 756 / JCM 1290 / NCIMB 6125 / NCTC 8237 / Type A).